A 1415-amino-acid polypeptide reads, in one-letter code: Zygote defective protein 9 (1415 aa).

2 TOG regions span residues methionine 1 to alanine 250 and proline 251 to alanine 530. The stretch at aspartate 21–arginine 48 forms a coiled coil. HEAT repeat units follow at residues glutamine 30–lysine 68, serine 95–serine 132, threonine 135–proline 172, and valine 179–leucine 217. A disordered region spans residues alanine 243–valine 278. Residues proline 255–alanine 276 are compositionally biased toward low complexity. HEAT repeat units lie at residues alanine 339 to threonine 377, proline 381 to leucine 418, alanine 420 to proline 457, and leucine 464 to leucine 502. Residues alanine 544 to glutamate 603 form a disordered region. Residues glutamate 562–glutamate 572 are compositionally biased toward acidic residues. The segment at alanine 602 to valine 867 is TOG 3. HEAT repeat units lie at residues isoleucine 706 to glycine 743, valine 764 to isoleucine 801, and leucine 804 to aspartate 841. The interval valine 867–aspartate 914 is disordered.

The protein belongs to the TOG/XMAP215 family. As to quaternary structure, interacts with tac-1 to form a heterodimer.

It is found in the cytoplasm. It localises to the cytoskeleton. The protein resides in the spindle pole. Its subcellular location is the microtubule organizing center. The protein localises to the centrosome. Functionally, plays a major role in organizing microtubules and spindle poles during mitosis and meiosis in one-cell stage embryos. Required for default nucleus positioning in oocytes. This is Zygote defective protein 9 from Caenorhabditis elegans.